A 72-amino-acid chain; its full sequence is Translation initiation factor IF-1 (72 aa).

The S1-like domain maps to 1-72 (MAKEEAIEIE…SKGRITYRYK (72 aa)).

Belongs to the IF-1 family. Component of the 30S ribosomal translation pre-initiation complex which assembles on the 30S ribosome in the order IF-2 and IF-3, IF-1 and N-formylmethionyl-tRNA(fMet); mRNA recruitment can occur at any time during PIC assembly.

It localises to the cytoplasm. One of the essential components for the initiation of protein synthesis. Stabilizes the binding of IF-2 and IF-3 on the 30S subunit to which N-formylmethionyl-tRNA(fMet) subsequently binds. Helps modulate mRNA selection, yielding the 30S pre-initiation complex (PIC). Upon addition of the 50S ribosomal subunit IF-1, IF-2 and IF-3 are released leaving the mature 70S translation initiation complex. This chain is Translation initiation factor IF-1, found in Chlorobium luteolum (strain DSM 273 / BCRC 81028 / 2530) (Pelodictyon luteolum).